The following is a 205-amino-acid chain: Cyanate hydratase (205 aa).

Catalysis depends on residues Arg-133, Glu-136, and Ser-159.

Belongs to the cyanase family.

The catalysed reaction is cyanate + hydrogencarbonate + 3 H(+) = NH4(+) + 2 CO2. In terms of biological role, catalyzes the reaction of cyanate with bicarbonate to produce ammonia and carbon dioxide. This Thalassiosira pseudonana (Marine diatom) protein is Cyanate hydratase.